Here is a 384-residue protein sequence, read N- to C-terminus: Zinc transporter 7 (384 aa).

A signal peptide spans 1–25 (MERFVQFLRRGNGLMAASLAAGSCA). At 26-46 (EEVAKAEGAGCRDDAAALRLK) the chain is on the extracellular side. A helical transmembrane segment spans residues 47-67 (GVAMATILVAGVVGVGLPLAG). The Cytoplasmic portion of the chain corresponds to 68 to 79 (RKRRALRTDSAA). Residues 80–100 (FVAAKAFAAGVILATGFVHML) traverse the membrane as a helical segment. Topologically, residues 101-119 (HDAEHALSSPCLPAHPWRS) are extracellular. A helical transmembrane segment spans residues 120–140 (FPFPGFVAMSAALATLVLDFL). Over 141-227 (ATRFYEGKHR…GEGEVPAQVR (87 aa)) the chain is Cytoplasmic. A disordered region spans residues 185–222 (DNKAPLLQPHSHSHSHPHGHGHGHELAQPEGSGGEGEV). A compositionally biased stretch (basic residues) spans 195–205 (SHSHSHPHGHG). The chain crosses the membrane as a helical span at residues 228 to 248 (SVVVSQILEMGIVSHSVIIGL). At 249 to 261 (SLGVSRSPCTIRP) the chain is on the extracellular side. The chain crosses the membrane as a helical span at residues 262–282 (LVAALSFHQFFEGFALGGCIA). The Cytoplasmic portion of the chain corresponds to 283–291 (QAQFKTLSA). Residues 292–312 (AIMACFFAITTPAGIAAGAGV) form a helical membrane-spanning segment. At 313 to 323 (ASFYNANSPRA) the chain is on the extracellular side. The helical transmembrane segment at 324–344 (LVVEGILDSVSAGILIYMSLV) threads the bilayer. Residues 345–363 (DLIAADFLGGKMTGSTRQQ) lie on the Cytoplasmic side of the membrane. A helical transmembrane segment spans residues 364 to 384 (VMAYIALFLGALSMSSLAIWA).

The protein belongs to the ZIP transporter (TC 2.A.5) family.

Its subcellular location is the cell membrane. Its function is as follows. Zinc transporter that may be involved in zinc uptake from the rhizosphere. The chain is Zinc transporter 7 (ZIP7) from Oryza sativa subsp. japonica (Rice).